Consider the following 268-residue polypeptide: Tropinone reductase homolog At2g29170 (268 aa).

22-46 (LVTGGSKGLGEAVVEELAMLGARVH) contributes to the NADP(+) binding site. Ser155 serves as a coordination point for substrate. The Proton acceptor role is filled by Tyr168.

This sequence belongs to the short-chain dehydrogenases/reductases (SDR) family. SDR65C subfamily.

The protein is Tropinone reductase homolog At2g29170 of Arabidopsis thaliana (Mouse-ear cress).